The following is a 277-amino-acid chain: N-acetylmuramic acid 6-phosphate etherase (277 aa).

The region spanning 53–216 (IIPRVKKGGR…STTIMIELGR (164 aa)) is the SIS domain. Residue Glu-81 is the Proton donor of the active site. Glu-112 is an active-site residue.

It belongs to the GCKR-like family. MurNAc-6-P etherase subfamily. In terms of assembly, homodimer.

It catalyses the reaction N-acetyl-D-muramate 6-phosphate + H2O = N-acetyl-D-glucosamine 6-phosphate + (R)-lactate. Its pathway is amino-sugar metabolism; N-acetylmuramate degradation. In terms of biological role, specifically catalyzes the cleavage of the D-lactyl ether substituent of MurNAc 6-phosphate, producing GlcNAc 6-phosphate and D-lactate. In Bacteroides thetaiotaomicron (strain ATCC 29148 / DSM 2079 / JCM 5827 / CCUG 10774 / NCTC 10582 / VPI-5482 / E50), this protein is N-acetylmuramic acid 6-phosphate etherase.